We begin with the raw amino-acid sequence, 79 residues long: Small ribosomal subunit protein uS17 (79 aa).

Belongs to the universal ribosomal protein uS17 family. As to quaternary structure, part of the 30S ribosomal subunit.

One of the primary rRNA binding proteins, it binds specifically to the 5'-end of 16S ribosomal RNA. The polypeptide is Small ribosomal subunit protein uS17 (Paramagnetospirillum magneticum (strain ATCC 700264 / AMB-1) (Magnetospirillum magneticum)).